We begin with the raw amino-acid sequence, 445 residues long: Nuclear hormone receptor family member nhr-1 (445 aa).

The disordered stretch occupies residues 19–55 (PMVNSQRNEDPSMYMNGSAASVSHTNGSSSMGNDQKF). Residues 36 to 51 (SAASVSHTNGSSSMGN) show a composition bias toward polar residues. The nuclear receptor DNA-binding region spans 70-145 (GELCAVCSDL…VGMDAKALQI (76 aa)). NR C4-type zinc fingers lie at residues 73-93 (CAVC…CNGC) and 109-133 (CQYN…FNKC). Residues 179–444 (QDQEIIDQLT…PFVKELCMKR (266 aa)) form the NR LBD domain.

It belongs to the nuclear hormone receptor family.

Its subcellular location is the nucleus. Functionally, orphan nuclear receptor which acts in concert with the insulin/IGF-1-like signaling (IIS) pathway during osmotic stress, perhaps in response to a ligand modified by the sulfotransferase ssu-1. The protein is Nuclear hormone receptor family member nhr-1 (nhr-1) of Caenorhabditis elegans.